The chain runs to 233 residues: Cytidylate kinase (233 aa).

ATP is bound at residue 15–23 (GPSGAGKSS).

This sequence belongs to the cytidylate kinase family. Type 1 subfamily.

It localises to the cytoplasm. The catalysed reaction is CMP + ATP = CDP + ADP. It carries out the reaction dCMP + ATP = dCDP + ADP. This Citrifermentans bemidjiense (strain ATCC BAA-1014 / DSM 16622 / JCM 12645 / Bem) (Geobacter bemidjiensis) protein is Cytidylate kinase.